A 513-amino-acid polypeptide reads, in one-letter code: Putative ATP-dependent RNA helicase QP509L (513 aa).

The 153-residue stretch at 110-262 folds into the Helicase ATP-binding domain; that stretch reads KKLLSPYGRF…KIIIHHLGQP (153 aa). An ATP-binding site is contributed by 123-130; sequence LNTGLGKT. The DEAH box motif lies at 215-218; that stretch reads DEAH.

It belongs to the DEAD box helicase family. DEAH subfamily.

It carries out the reaction ATP + H2O = ADP + phosphate + H(+). This chain is Putative ATP-dependent RNA helicase QP509L, found in African swine fever virus (isolate Tick/South Africa/Pretoriuskop Pr4/1996) (ASFV).